A 95-amino-acid polypeptide reads, in one-letter code: UPF0235 protein MS0322 (95 aa).

This sequence belongs to the UPF0235 family.

This chain is UPF0235 protein MS0322, found in Mannheimia succiniciproducens (strain KCTC 0769BP / MBEL55E).